The sequence spans 386 residues: Small ribosomal subunit protein uS3m (386 aa).

It belongs to the universal ribosomal protein uS3 family.

The protein localises to the mitochondrion. Its function is as follows. Essential for mitochondrial protein synthesis and required for the maturation of small ribosomal subunits. The protein is Small ribosomal subunit protein uS3m (VAR1) of Wickerhamomyces canadensis (Yeast).